The sequence spans 671 residues: K(+)-insensitive pyrophosphate-energized proton pump (671 aa).

A run of 5 helical transmembrane segments spans residues 3-23 (SLIF…AFFA), 57-77 (TIAV…DDGL), 79-99 (IAIG…IGMS), 128-148 (AVTG…FYIL), and 156-176 (VGFG…GGIF). Position 178 (lysine 178) interacts with substrate. Residues aspartate 181, aspartate 185, asparagine 208, and aspartate 211 each coordinate Mg(2+). 6 consecutive transmembrane segments (helical) span residues 223-243 (LFET…LIIG), 249-269 (ILYP…SVFF), 285-305 (GVGG…NSLM), 310-330 (LFYA…ITEY), 366-386 (LVPT…VGGA), and 391-411 (IGLY…GMIV). Aspartate 421 lines the Mg(2+) pocket. A run of 4 helical transmembrane segments spans residues 452 to 472 (AVTK…LFAD), 490 to 510 (VVLA…AVTM), 558 to 578 (MAMP…ILGP), and 580 to 600 (ALAG…LMMD). Residues aspartate 607, aspartate 633, and aspartate 637 each coordinate Ca(2+). Lysine 640 contributes to the substrate binding site. A helical transmembrane segment spans residues 646–666 (ALNALIKVVNMVAILFSSLII).

This sequence belongs to the H(+)-translocating pyrophosphatase (TC 3.A.10) family. K(+)-insensitive subfamily. As to quaternary structure, homodimer. Mg(2+) is required as a cofactor.

Its subcellular location is the cell membrane. The catalysed reaction is diphosphate + H2O + H(+)(in) = 2 phosphate + 2 H(+)(out). Functionally, proton pump that utilizes the energy of pyrophosphate hydrolysis as the driving force for proton movement across the membrane. Generates a proton motive force. This chain is K(+)-insensitive pyrophosphate-energized proton pump, found in Methanosarcina acetivorans (strain ATCC 35395 / DSM 2834 / JCM 12185 / C2A).